The chain runs to 298 residues: Formylmethanofuran--tetrahydromethanopterin formyltransferase (298 aa).

This sequence belongs to the FTR family. In terms of assembly, homotetramer.

The protein resides in the cytoplasm. The enzyme catalyses N-formylmethanofuran + 5,6,7,8-tetrahydromethanopterin + H(+) = N(5)-formyl-5,6,7,8-tetrahydromethanopterin + methanofuran. The protein operates within one-carbon metabolism; formaldehyde degradation; formate from formaldehyde (H(4)MPT route): step 4/5. Functionally, catalyzes the transfer of a formyl group from 5-formyl tetrahydromethanopterin (5-formyl-H(4)MPT) to methanofuran (MFR) to produce formylmethanofuran (formyl-MFR) and tetrahydromethanopterin (H(4)MPT). In Methylococcus capsulatus (strain ATCC 33009 / NCIMB 11132 / Bath), this protein is Formylmethanofuran--tetrahydromethanopterin formyltransferase.